We begin with the raw amino-acid sequence, 98 residues long: NADH-ubiquinone oxidoreductase chain 4L (98 aa).

The next 3 membrane-spanning stretches (helical) occupy residues 1–21 (MSLVHINILMAFIMSLTGLLM), 29–49 (ALLCLEGMMLSLFVLATLTIL), and 61–81 (IILLVFAACEAAIGLALLVMI).

This sequence belongs to the complex I subunit 4L family. As to quaternary structure, core subunit of respiratory chain NADH dehydrogenase (Complex I) which is composed of 45 different subunits.

It localises to the mitochondrion inner membrane. The catalysed reaction is a ubiquinone + NADH + 5 H(+)(in) = a ubiquinol + NAD(+) + 4 H(+)(out). Core subunit of the mitochondrial membrane respiratory chain NADH dehydrogenase (Complex I) which catalyzes electron transfer from NADH through the respiratory chain, using ubiquinone as an electron acceptor. Part of the enzyme membrane arm which is embedded in the lipid bilayer and involved in proton translocation. This Delphinapterus leucas (Beluga whale) protein is NADH-ubiquinone oxidoreductase chain 4L (MT-ND4L).